A 268-amino-acid chain; its full sequence is Undecaprenyl-diphosphatase (268 aa).

The next 7 helical transmembrane spans lie at 47–67, 83–103, 109–129, 144–164, 184–204, 218–238, and 246–266; these read FTVL…FAKL, FVIG…IAGK, LFNP…LMWV, FPLP…IPGV, AAEF…AYDF, TVAI…KAFL, and FTFF…ALAL.

This sequence belongs to the UppP family.

It is found in the cell inner membrane. It catalyses the reaction di-trans,octa-cis-undecaprenyl diphosphate + H2O = di-trans,octa-cis-undecaprenyl phosphate + phosphate + H(+). Functionally, catalyzes the dephosphorylation of undecaprenyl diphosphate (UPP). Confers resistance to bacitracin. This Nitrobacter winogradskyi (strain ATCC 25391 / DSM 10237 / CIP 104748 / NCIMB 11846 / Nb-255) protein is Undecaprenyl-diphosphatase.